Reading from the N-terminus, the 212-residue chain is RNA chaperone ProQ (212 aa).

The interval 107–153 (QDKAKAKRVAQAKSANPAAKTAKKPVKKPVAKRPKPAQSSKPAKEPV) is disordered. Residues 117-126 (QAKSANPAAK) show a composition bias toward low complexity. Positions 127-141 (TAKKPVKKPVAKRPK) are enriched in basic residues.

This sequence belongs to the ProQ family.

The protein resides in the cytoplasm. Functionally, RNA chaperone with significant RNA binding, RNA strand exchange and RNA duplexing activities. This is RNA chaperone ProQ from Shewanella pealeana (strain ATCC 700345 / ANG-SQ1).